The following is a 618-amino-acid chain: Carotenoid cleavage dioxygenase 7, chloroplastic (618 aa).

Residues 1 to 31 (MSLPIPPKFLPPLKSPPIHHHQTPPPLAPPR) constitute a chloroplast transit peptide. Residues 11 to 34 (PPLKSPPIHHHQTPPPLAPPRAAI) are disordered. His266, His319, His398, and His612 together coordinate Fe cation.

Belongs to the carotenoid oxygenase family. Requires Fe(2+) as cofactor. In terms of tissue distribution, expressed in flowers, siliques, inflorescence stems, petiole, leaves and roots.

The protein resides in the plastid. It localises to the chloroplast. It carries out the reaction 9-cis-beta-carotene + O2 = 9-cis-10'-apo-beta-carotenal + beta-ionone. Functionally, involved in strigolactones biosynthesis by cleaving asymmetrically a variety of linear and cyclic carotenoids at the 9-10 double bond. Produces one C(13) beta-ionone and the C(27) 10'-apo-beta-carotenal. Strigolactones are hormones that inhibit tillering and shoot branching through the MAX-dependent pathway, contribute to the regulation of shoot architectural response to phosphate-limiting conditions and function as rhizosphere signal that stimulates hyphal branching of arbuscular mycorrhizal fungi and trigger seed germination of root parasitic weeds. No activity on lycopene, lutein, zeaxanthin, violaxanthin or neoxanthin. Probably not involved in abscisic acid biosynthesis. The protein is Carotenoid cleavage dioxygenase 7, chloroplastic (CCD7) of Arabidopsis thaliana (Mouse-ear cress).